Reading from the N-terminus, the 831-residue chain is Prickle-like protein 1 (831 aa).

In terms of domain architecture, PET spans 14-122 (FGCQRSSTSD…TIKLLSRAVM (109 aa)). 3 LIM zinc-binding domains span residues 124–189 (AVCE…LLKP), 189–249 (PRCS…LYAE), and 249–313 (EYCE…EDVH). Residues 313-342 (HASDSSDSAFQSARSRDSRRSVRMGKSSRS) are disordered. S315, S591, and S594 each carry phosphoserine. 2 disordered regions span residues 663–688 (FEER…NALN) and 763–831 (CSSS…CIIS). A compositionally biased stretch (basic residues) spans 669–680 (RSHHHRRRRSRK). The residue at position 683 (S683) is a Phosphoserine. A compositionally biased stretch (basic residues) spans 815-831 (TKSKKKKGHKGKNCIIS). Residue C828 is modified to Cysteine methyl ester. C828 is lipidated: S-farnesyl cysteine. Residues 829 to 831 (IIS) constitute a propeptide, removed in mature form.

It belongs to the prickle / espinas / testin family. As to quaternary structure, interacts with REST. Expressed at highest levels in placenta and at lower levels in lung, liver, kidney and pancreas. Expressed in thalamus, hippocampus, cerebral cortex, and cerebellum (in neurons rather than glia).

The protein resides in the nucleus membrane. It is found in the cytoplasm. It localises to the cytosol. Its function is as follows. Involved in the planar cell polarity pathway that controls convergent extension during gastrulation and neural tube closure. Convergent extension is a complex morphogenetic process during which cells elongate, move mediolaterally, and intercalate between neighboring cells, leading to convergence toward the mediolateral axis and extension along the anteroposterior axis. Necessary for nuclear localization of REST. May serve as nuclear receptor. The protein is Prickle-like protein 1 (PRICKLE1) of Homo sapiens (Human).